The chain runs to 185 residues: UPF0397 protein LJ_1703 (185 aa).

The next 5 membrane-spanning stretches (helical) occupy residues 6–26 (GLSV…VILA), 46–66 (FLAL…GFIG), 78–98 (TWWS…LYGM), 113–133 (IGFN…IAPV), and 147–167 (FLQG…LGTI).

It belongs to the UPF0397 family.

Its subcellular location is the cell membrane. This Lactobacillus johnsonii (strain CNCM I-12250 / La1 / NCC 533) protein is UPF0397 protein LJ_1703.